We begin with the raw amino-acid sequence, 361 residues long: Ataxin-3 (361 aa).

A Peptide (Met-Gly) (interchain with G-Cter in ubiquitin) cross-link involves residue Met1. Residues 1–180 (MESIFHEKQE…DCEADQLLQM (180 aa)) form the Josephin domain. The active-site Nucleophile is the Cys14. His119 serves as the catalytic Proton acceptor. Residue Asn134 is part of the active site. Lys200 is covalently cross-linked (Glycyl lysine isopeptide (Lys-Gly) (interchain with G-Cter in ubiquitin)). Position 219 is a phosphoserine (Ser219). 2 consecutive UIM domains span residues 224 to 243 (EDEE…IDME) and 244 to 263 (DEEA…SSRN). Residues 258–278 (QGSSRNISQDMTQTSGTNLTS) show a composition bias toward polar residues. The tract at residues 258 to 338 (QGSSRNISQD…DLGDAMSEED (81 aa)) is disordered. Residues Ser265 and Ser272 each carry the phosphoserine modification. Residues 279 to 293 (EELRKRREAYFEKQQ) are compositionally biased toward basic and acidic residues. Residues 294–305 (QKQQQQQQQQQQ) are compositionally biased toward low complexity. Over residues 306–325 (GDLSGQSSHPCERPATSSGA) the composition is skewed to polar residues. The residue at position 328 (Ser328) is a Phosphoserine. The UIM 3 domain occupies 331–349 (GDAMSEEDMLQAAVTMSLE).

Interacts with STUB1/CHIP (when monoubiquitinated). Interacts with DNA repair proteins RAD23A and RAD23B. Interacts with BECN1 (via its poly-Gln domain). Interacts with PRKN, UBR2, VCP and tubulin. Short isoform 1 interacts with CASP7. Post-translationally, monoubiquitinated N-terminally by UBE2W, possibly leading to activate the deubiquitinating enzyme activity. In terms of tissue distribution, ubiquitous.

The protein resides in the nucleus matrix. Its subcellular location is the nucleus. It localises to the lysosome membrane. It catalyses the reaction Thiol-dependent hydrolysis of ester, thioester, amide, peptide and isopeptide bonds formed by the C-terminal Gly of ubiquitin (a 76-residue protein attached to proteins as an intracellular targeting signal).. Its function is as follows. Deubiquitinating enzyme involved in protein homeostasis maintenance, transcription, cytoskeleton regulation, myogenesis and degradation of misfolded chaperone substrates. Binds long polyubiquitin chains and trims them, while it has weak or no activity against chains of 4 or less ubiquitins. Involved in degradation of misfolded chaperone substrates via its interaction with STUB1/CHIP: recruited to monoubiquitinated STUB1/CHIP, and restricts the length of ubiquitin chain attached to STUB1/CHIP substrates and preventing further chain extension. Interacts with key regulators of transcription and represses transcription: acts as a histone-binding protein that regulates transcription. Acts as a negative regulator of mTORC1 signaling in response to amino acid deprivation by mediating deubiquitination of RHEB, thereby promoting RHEB inactivation by the TSC-TBC complex. Regulates autophagy via the deubiquitination of 'Lys-402' of BECN1 leading to the stabilization of BECN1. The protein is Ataxin-3 of Homo sapiens (Human).